The primary structure comprises 393 residues: (S)-mandelate dehydrogenase (393 aa).

Positions 1-377 (MSQNLFNVED…SPDYLQNEGV (377 aa)) constitute an FMN hydroxy acid dehydrogenase domain. Tyr-26 provides a ligand contact to (S)-mandelate. Residues 79–81 (PTG), Ser-108, and Gln-129 each bind FMN. Tyr-131 provides a ligand contact to (S)-mandelate. Position 156 (Thr-156) interacts with FMN. (S)-mandelate is bound at residue Arg-165. Position 250 (Lys-250) interacts with FMN. (S)-mandelate-binding residues include His-274 and Arg-277. His-274 serves as the catalytic Proton acceptor. FMN is bound by residues 303-307 (DSGFR) and 326-327 (GR).

The protein belongs to the FMN-dependent alpha-hydroxy acid dehydrogenase family. In terms of assembly, homotetramer. FMN is required as a cofactor.

Its subcellular location is the cell inner membrane. It catalyses the reaction (S)-mandelate + A = phenylglyoxylate + AH2. The protein operates within aromatic compound metabolism; (R)-mandelate degradation; benzoate from (R)-mandelate: step 2/4. Its function is as follows. Catalyzes the dehydrogenation of (S)-mandelate to phenylglyoxylate (benzoylformate). Is likely involved in the utilization of mandelate as a sole source of carbon and energy for growth. Active in vitro with the artificial electron acceptors 2,6-dichlorophenolindophenol (DCPIP) or ferricyanide, but in vivo most likely transfer the electron pair from the reduced flavin to a component of the electron transport chain in the membrane, possibly a quinone. Shows very low activity with oxygen as the electron acceptor, and also with 3-indolelactate and medium chain 2-hydroxyacids as substrates. This is (S)-mandelate dehydrogenase from Pseudomonas putida (Arthrobacter siderocapsulatus).